The sequence spans 85 residues: Small ribosomal subunit protein uS17 (85 aa).

The protein belongs to the universal ribosomal protein uS17 family. Part of the 30S ribosomal subunit.

Its function is as follows. One of the primary rRNA binding proteins, it binds specifically to the 5'-end of 16S ribosomal RNA. The chain is Small ribosomal subunit protein uS17 from Mycoplasma capricolum subsp. capricolum (strain California kid / ATCC 27343 / NCTC 10154).